The primary structure comprises 469 residues: MADEVPTAVPLATPAGSSSLSFTQGFLLGQLSIAILIFCFIKFFIFGEPPSADDRALHLNSLRRARTLAHQQSYKQLRTRANSTSLSLRHKPSTSIIRKGEETRGGPSIATILAKTYYNVKGHQPESLDWFNVLIAQTIAQLRADARQDDAILTSLTEVLNTGSKPDWIGEIKVTEIALGDEFPIFSNCRVMPAEDGFWYGPGSTGNDKERLQARMDVDLSDVITIGVETTLNLNWPKPMSAVLPVALAVSIVRFSGTLAMSFIPSSSPPSTTAPMPSPTSNTHRSSSPSRPASSSGAPPHRPTTLAFTFLDDYRLDLSVRSLVGSRSRLQDVPKIAQLIESRVHAWFDERAVEPRFQQIVLPSLWPRKHNTRGGAPEDTEAAAEGEEGLDEDDFAVVDGNGTAPGSTSYIPSPIAENVTLEERIEAEGAKMREAEIRAGVRKPSASQERSRGRDDRADGMRWRGALPR.

Over 1–25 (MADEVPTAVPLATPAGSSSLSFTQG) the chain is Lumenal. Residues 26 to 46 (FLLGQLSIAILIFCFIKFFIF) traverse the membrane as a helical segment. Topologically, residues 47–469 (GEPPSADDRA…GMRWRGALPR (423 aa)) are cytoplasmic. Residues 124-363 (QPESLDWFNV…EPRFQQIVLP (240 aa)) form the SMP-LTD domain. Residues 266–299 (SSSPPSTTAPMPSPTSNTHRSSSPSRPASSSGAP) show a composition bias toward low complexity. Disordered stretches follow at residues 266–304 (SSSP…HRPT) and 426–469 (EAEG…ALPR). Basic and acidic residues-rich tracts occupy residues 426 to 439 (EAEG…EIRA) and 449 to 462 (ERSR…DGMR).

Belongs to the MMM1 family. In terms of assembly, homodimer. Component of the ER-mitochondria encounter structure (ERMES) or MDM complex, composed of mmm1, MDM10, MDM12 and MDM34. A mmm1 homodimer associates with one molecule of MDM12 on each side in a pairwise head-to-tail manner, and the SMP-LTD domains of mmm1 and MDM12 generate a continuous hydrophobic tunnel for phospholipid trafficking.

It is found in the endoplasmic reticulum membrane. Its function is as follows. Component of the ERMES/MDM complex, which serves as a molecular tether to connect the endoplasmic reticulum (ER) and mitochondria. Components of this complex are involved in the control of mitochondrial shape and protein biogenesis, and function in nonvesicular lipid trafficking between the ER and mitochondria. The MDM12-mmm1 subcomplex functions in the major beta-barrel assembly pathway that is responsible for biogenesis of all outer membrane beta-barrel proteins, and acts in a late step after the SAM complex. The MDM10-MDM12-mmm1 subcomplex further acts in the TOM40-specific pathway after the action of the MDM12-mmm1 complex. Essential for establishing and maintaining the structure of mitochondria and maintenance of mtDNA nucleoids. In Pyrenophora tritici-repentis (strain Pt-1C-BFP) (Wheat tan spot fungus), this protein is Maintenance of mitochondrial morphology protein 1.